The chain runs to 333 residues: uncharacterized protein (333 aa).

A signal peptide spans 1 to 23 (MSRSFMIILTIMLIALSLGEVLA). Residues 232–252 (SFFLGVLVTLMILSPVIVYLW) form a helical membrane-spanning segment.

It is found in the membrane. This is an uncharacterized protein from Pyrococcus abyssi (strain GE5 / Orsay).